The primary structure comprises 301 residues: Probable alpha-L-glutamate ligase (301 aa).

The region spanning 104–287 is the ATP-grasp domain; it reads LQLLARKGIG…VATKVIEFIE (184 aa). ATP contacts are provided by residues Lys141, 178–179, Asp187, and 211–213; these read EF and RSN. The Mg(2+) site is built by Asp248, Glu260, and Asn262. Mn(2+)-binding residues include Asp248, Glu260, and Asn262.

Belongs to the RimK family. Mg(2+) is required as a cofactor. Mn(2+) serves as cofactor.

In Nitrosococcus oceani (strain ATCC 19707 / BCRC 17464 / JCM 30415 / NCIMB 11848 / C-107), this protein is Probable alpha-L-glutamate ligase.